The following is a 414-amino-acid chain: Enterobactin exporter EntS (414 aa).

Residues 1–21 lie on the Cytoplasmic side of the membrane; it reads MNRQSWLLNLSLLKTHPAFRA. Residues 22-42 traverse the membrane as a helical segment; that stretch reads VFLARFISIVSLGLLGVAVPV. Over 43–55 the chain is Periplasmic; that stretch reads QIQMMTHSTWQVG. Residues 56-76 traverse the membrane as a helical segment; the sequence is LSVTLTGGAMFIGLMVGGVLA. The Cytoplasmic portion of the chain corresponds to 77–83; it reads DRYERKK. A helical transmembrane segment spans residues 84-104; it reads VILLARGTCGIGFIGLCVNAL. Residues 105-109 lie on the Periplasmic side of the membrane; it reads LPEPS. The chain crosses the membrane as a helical span at residues 110–130; that stretch reads LLAIYLLGLWDGFFASLGVTA. Over 131-156 the chain is Cytoplasmic; that stretch reads LLAATPALVGRENLMQAGAITMLTVR. Residues 157-177 traverse the membrane as a helical segment; it reads LGSVISPMLGGILLASGGVAW. Position 178 (Asn178) is a topological domain, periplasmic. The chain crosses the membrane as a helical span at residues 179 to 199; the sequence is YGLAAAGTFITLLPLLTLPRL. The Cytoplasmic segment spans residues 200-218; it reads PVPPQPRENPFIALLAAFR. Residues 219 to 239 form a helical membrane-spanning segment; the sequence is FLLASPLIGGIALLGGLVTMA. Residues 240–256 are Periplasmic-facing; the sequence is SAVRVLYPALAMSWQMS. The helical transmembrane segment at 257 to 277 threads the bilayer; the sequence is AAQIGLLYAAIPLGAAIGALT. Over 278-287 the chain is Cytoplasmic; that stretch reads SGQLAHSVRP. Residues 288-307 form a helical membrane-spanning segment; sequence GLIMLVSTVGSFLAVGLFAI. Topologically, residues 308 to 313 are periplasmic; that stretch reads MPVWIA. Residues 314–336 traverse the membrane as a helical segment; the sequence is GVICLALFGWLSAISSLLQYTLL. At 337 to 356 the chain is on the cytoplasmic side; sequence QTQTPENMLGRMNGLWTAQN. A helical transmembrane segment spans residues 357-377; that stretch reads VTGDAIGAALLGGLGAMMTPV. Position 378 (Ala378) is a topological domain, periplasmic. Residues 379–399 form a helical membrane-spanning segment; it reads SASVSGFGLVIIGLLLLLVLG. Residues 400 to 414 are Cytoplasmic-facing; sequence ELRRFRQTPPVSDAG.

The protein belongs to the major facilitator superfamily. EntS (TC 2.A.1.38) family.

It is found in the cell inner membrane. Its function is as follows. Component of an export pathway for enterobactin. The chain is Enterobactin exporter EntS from Salmonella typhimurium (strain LT2 / SGSC1412 / ATCC 700720).